Reading from the N-terminus, the 640-residue chain is 5-aminolevulinate synthase, non-specific, mitochondrial (640 aa).

Residues Met-1–Gln-56 constitute a mitochondrion transit peptide. Disordered stretches follow at residues Glu-60–Gly-103 and Glu-143–Pro-163. Over residues Val-75–Pro-92 the composition is skewed to polar residues. Substrate-binding residues include Arg-217, Ser-334, and Lys-353. Pyridoxal 5'-phosphate contacts are provided by Ser-386, His-414, and Thr-442. The active site involves Lys-445. Lys-445 bears the N6-(pyridoxal phosphate)lysine mark. Residues Thr-474 and Thr-475 each contribute to the pyridoxal 5'-phosphate site. Residue Thr-562 coordinates substrate. Pro-576 bears the Hydroxyproline mark.

It belongs to the class-II pyridoxal-phosphate-dependent aminotransferase family. In terms of assembly, homodimer. Interacts (hydroxylated form) with VHL. It depends on pyridoxal 5'-phosphate as a cofactor. Post-translationally, in normoxia, is hydroxylated at Pro-576, promoting interaction with VHL, initiating ubiquitination and subsequent degradation via the proteasome. In terms of processing, ubiquitinated; in normoxia following hydroxylation and interaction with VHL, leading to its subsequent degradation via the proteasome.

It is found in the mitochondrion inner membrane. The enzyme catalyses succinyl-CoA + glycine + H(+) = 5-aminolevulinate + CO2 + CoA. The protein operates within porphyrin-containing compound metabolism; protoporphyrin-IX biosynthesis; 5-aminolevulinate from glycine: step 1/1. In terms of biological role, catalyzes the pyridoxal 5'-phosphate (PLP)-dependent condensation of succinyl-CoA and glycine to form aminolevulinic acid (ALA), with CoA and CO2 as by-products. This Pongo abelii (Sumatran orangutan) protein is 5-aminolevulinate synthase, non-specific, mitochondrial (ALAS1).